The chain runs to 634 residues: UPF0313 protein PG_0934 (634 aa).

One can recognise a Radical SAM core domain in the interval 302–582; sequence AYEMIKHSVN…RQHMFFFWYK (281 aa). The [4Fe-4S] cluster site is built by Cys-316, Cys-320, and Cys-323. Positions 607–634 are disordered; that stretch reads DRTTSSRNDRHTPPSTQPRKSKSKSRHS. Residues 625–634 are compositionally biased toward basic residues; the sequence is RKSKSKSRHS.

The protein belongs to the UPF0313 family. It depends on [4Fe-4S] cluster as a cofactor.

This Porphyromonas gingivalis (strain ATCC BAA-308 / W83) protein is UPF0313 protein PG_0934.